The chain runs to 149 residues: Urease accessory protein UreE (149 aa).

The protein belongs to the UreE family.

The protein localises to the cytoplasm. Involved in urease metallocenter assembly. Binds nickel. Probably functions as a nickel donor during metallocenter assembly. This is Urease accessory protein UreE from Synechococcus sp. (strain JA-3-3Ab) (Cyanobacteria bacterium Yellowstone A-Prime).